Here is a 119-residue protein sequence, read N- to C-terminus: Type II secretion system protein I (119 aa).

Residues 1–5 (MNARG) constitute a propeptide, leader sequence. Met6 carries the N-methylmethionine modification. A helical transmembrane segment spans residues 6 to 26 (MTLLEVMVALAVFAIAGLAVM).

This sequence belongs to the GSP I family. In terms of assembly, type II secretion is composed of four main components: the outer membrane complex, the inner membrane complex, the cytoplasmic secretion ATPase and the periplasm-spanning pseudopilus. Interacts with core component ExeG. Cleaved by prepilin peptidase. Post-translationally, methylated by prepilin peptidase at the amino group of the N-terminal methionine once the leader sequence is cleaved by prepilin peptidase.

Its subcellular location is the cell inner membrane. Functionally, component of the type II secretion system required for the energy-dependent secretion of extracellular factors such as proteases and toxins from the periplasm. Part of the pseudopilus tip complex that is critical for the recognition and binding of secretion substrates. This is Type II secretion system protein I (exeI) from Aeromonas hydrophila.